Here is a 259-residue protein sequence, read N- to C-terminus: MILLIDVGNTNIVLGIHDNEKYIASWRISTDSKKTSDEYSIQVMQLFNQAKLNPEDVEGIIISSVVPNIMHSLENMVRKCFCKEPIVVGPGIKTGINIKYDNPKEVGADRIVNAVAAFEKHKKPMIIIDFGTATTFCAITEKGDYLGGNICPGIQISADALFERAAKLPRIELEKPKSVICKNTVTSMQAGIIYGYIGKVEYIVKRMKKEMMDLGEKEPFVLATGGLAKLVYSETDVIDEVDRKLTLEGLKILYEKNKE.

Asp-6–Val-13 contacts ATP. Substrate-binding positions include Tyr-100 and Gly-107–Arg-110. The active-site Proton acceptor is Asp-109. Residue Asp-129 participates in K(+) binding. ATP is bound at residue Thr-132. Thr-184 lines the substrate pocket.

Belongs to the type III pantothenate kinase family. In terms of assembly, homodimer. Requires NH4(+) as cofactor. The cofactor is K(+).

Its subcellular location is the cytoplasm. The catalysed reaction is (R)-pantothenate + ATP = (R)-4'-phosphopantothenate + ADP + H(+). The protein operates within cofactor biosynthesis; coenzyme A biosynthesis; CoA from (R)-pantothenate: step 1/5. Catalyzes the phosphorylation of pantothenate (Pan), the first step in CoA biosynthesis. This chain is Type III pantothenate kinase, found in Clostridium perfringens (strain 13 / Type A).